Reading from the N-terminus, the 159-residue chain is Protein-export protein SecB (159 aa).

The protein belongs to the SecB family. As to quaternary structure, homotetramer, a dimer of dimers. One homotetramer interacts with 1 SecA dimer.

The protein resides in the cytoplasm. In terms of biological role, one of the proteins required for the normal export of preproteins out of the cell cytoplasm. It is a molecular chaperone that binds to a subset of precursor proteins, maintaining them in a translocation-competent state. It also specifically binds to its receptor SecA. The protein is Protein-export protein SecB of Pseudomonas fluorescens (strain ATCC BAA-477 / NRRL B-23932 / Pf-5).